Consider the following 151-residue polypeptide: Cell division protein SepF (151 aa).

It belongs to the SepF family. In terms of assembly, homodimer. Interacts with FtsZ.

It localises to the cytoplasm. In terms of biological role, cell division protein that is part of the divisome complex and is recruited early to the Z-ring. Probably stimulates Z-ring formation, perhaps through the cross-linking of FtsZ protofilaments. Its function overlaps with FtsA. The chain is Cell division protein SepF from Desulfitobacterium hafniense (strain Y51).